The chain runs to 371 residues: N-acetyldiaminopimelate deacetylase (371 aa).

Aspartate 68 is an active-site residue. Glutamate 127 (proton acceptor) is an active-site residue.

It belongs to the peptidase M20A family. N-acetyldiaminopimelate deacetylase subfamily.

The catalysed reaction is N-acetyl-(2S,6S)-2,6-diaminopimelate + H2O = (2S,6S)-2,6-diaminopimelate + acetate. Its pathway is amino-acid biosynthesis; L-lysine biosynthesis via DAP pathway; LL-2,6-diaminopimelate from (S)-tetrahydrodipicolinate (acetylase route): step 3/3. Catalyzes the conversion of N-acetyl-diaminopimelate to diaminopimelate and acetate. The protein is N-acetyldiaminopimelate deacetylase of Listeria monocytogenes serotype 4b (strain CLIP80459).